The following is a 447-amino-acid chain: NAD-dependent histone deacetylase HST3 (447 aa).

The disordered stretch occupies residues 1–21 (MTSVSPSPPASRSGSMCSDLP). The region spanning 35–363 (LDADDEVLRR…IKKLRQLKRE (329 aa)) is the Deacetylase sirtuin-type domain. NAD(+)-binding positions include 60 to 79 (GAGISCNAGIPDFRSSDGLY) and 151 to 154 (QNID). Residue His-187 is the Proton acceptor of the active site. Cys-195, Cys-198, Cys-220, and Cys-223 together coordinate Zn(2+). NAD(+)-binding positions include 282 to 284 (GTS), 312 to 314 (NKT), and Cys-333. A compositionally biased stretch (basic and acidic residues) spans 365–375 (SDLRKQMKAQK). Disordered regions lie at residues 365 to 393 (SDLRKQMKAQKDSIGTPPTTPLRTAQGID) and 411 to 447 (KRKILSPENSSEEDEEENLDTRKRAKIRPTFGDNQAS).

It belongs to the sirtuin family. Class I subfamily. Zn(2+) serves as cofactor.

The protein resides in the cytoplasm. The protein localises to the nucleus. It carries out the reaction N(6)-acetyl-L-lysyl-[protein] + NAD(+) + H2O = 2''-O-acetyl-ADP-D-ribose + nicotinamide + L-lysyl-[protein]. Functionally, NAD-dependent histone deacetylase, which contributes together with HST4 to histone H3 'Lys-56' deacetylation, regulation of telomeric silencing, proper cell cycle progression, DNA damage control, DNA recombination, and genomic maintenance. This Saccharomyces cerevisiae (strain ATCC 204508 / S288c) (Baker's yeast) protein is NAD-dependent histone deacetylase HST3 (HST3).